Here is a 177-residue protein sequence, read N- to C-terminus: MPSSSAVLCCLVFLAGVAASRDASTLSDSSCTHFPASLPHMLRDVRAAFGKVKTFFQMKDQLNSMLLTQSLLDDFKGYLGCQALSEMIQFYLEEVMPQAENHGPDIKEHVNSLGEKLKTLRLRLRRCHRFLPCENKSKAVEQVKRVFNMLQERGVYKAMSEFDIFINYIESYMTTKM.

An N-terminal signal peptide occupies residues 1–19 (MPSSSAVLCCLVFLAGVAA). Cystine bridges form between cysteine 31-cysteine 127 and cysteine 81-cysteine 133. N-linked (GlcNAc...) asparagine glycosylation is present at asparagine 135.

It belongs to the IL-10 family. Homodimer. Interacts with IL10RA and IL10RB.

The protein resides in the secreted. Major immune regulatory cytokine that acts on many cells of the immune system where it has profound anti-inflammatory functions, limiting excessive tissue disruption caused by inflammation. Mechanistically, IL10 binds to its heterotetrameric receptor comprising IL10RA and IL10RB leading to JAK1 and STAT2-mediated phosphorylation of STAT3. In turn, STAT3 translocates to the nucleus where it drives expression of anti-inflammatory mediators. Targets antigen-presenting cells (APCs) such as macrophages and monocytes and inhibits their release of pro-inflammatory cytokines including granulocyte-macrophage colony-stimulating factor /GM-CSF, granulocyte colony-stimulating factor/G-CSF, IL-1 alpha, IL-1 beta, IL-6, IL-8 and TNF-alpha. Also interferes with antigen presentation by reducing the expression of MHC-class II and co-stimulatory molecules, thereby inhibiting their ability to induce T cell activation. In addition, controls the inflammatory response of macrophages by reprogramming essential metabolic pathways including mTOR signaling. This chain is Interleukin-10 (IL10), found in Ovis aries (Sheep).